We begin with the raw amino-acid sequence, 354 residues long: RH-like protein (354 aa).

8 helical membrane passes run 11 to 31 (GCLP…FFFF), 45 to 65 (VATY…LGFL), 77 to 97 (VAFN…LDGF), 125 to 145 (ISVG…MVLV), 167 to 187 (VNIM…AWCL), 209 to 229 (AMLG…ALLT), 238 to 258 (VFNT…VSSL), and 287 to 307 (LISS…ISIG).

Belongs to the ammonium transporter (TC 2.A.49) family. Rh subfamily.

It is found in the membrane. Functionally, may be part of an oligomeric complex which is likely to have a transport or channel function in the erythrocyte membrane. The polypeptide is RH-like protein (Hylobates pileatus (Pileated gibbon)).